Reading from the N-terminus, the 342-residue chain is NADH-ubiquinone oxidoreductase chain 2 (342 aa).

Helical transmembrane passes span Thr25–Leu45, Ile58–Ile78, Met94–Pro114, Met146–Leu166, Ile174–Glu194, Asn195–Phe215, Phe238–Pro258, Leu274–Phe294, and Val316–Phe336.

It belongs to the complex I subunit 2 family.

Its subcellular location is the mitochondrion inner membrane. The catalysed reaction is a ubiquinone + NADH + 5 H(+)(in) = a ubiquinol + NAD(+) + 4 H(+)(out). Functionally, core subunit of the mitochondrial membrane respiratory chain NADH dehydrogenase (Complex I) that is believed to belong to the minimal assembly required for catalysis. Complex I functions in the transfer of electrons from NADH to the respiratory chain. The immediate electron acceptor for the enzyme is believed to be ubiquinone. The protein is NADH-ubiquinone oxidoreductase chain 2 (ND2) of Locusta migratoria (Migratory locust).